Here is a 385-residue protein sequence, read N- to C-terminus: MTTTGSNSNHNHHESNNNNNNPSTRSWGTAVSGQSVSTSGSMGSPSSRSEQTITVVTSTSDTTFQRLNNLDIQGDDAGSQGASGVKKKKRGQRAAGPDKTGRGLRQFSMKVCEKVESKGRTTYNEVADELVAEFALPNNDGTSPDQQQYDEKNIRRRVYDALNVLMAMDIISKDKKEIQWRGLPRTSLSDIEELKNERLSLRNRIEKKTAYSQELEEQYVGLQNLIQRNEHLYSSGNAPSGGVALPFILVQTRPHATVEVEISEDMQLVHFDFNSTPFELHDDNFVLKTMKFCDQPPQQPNGRNNSQLVCHNFTPENPNKGPSTGPTPQLDMYETHLQSQQHQQHSQLQIIPMPETNNVTSSADTAPVKSPSLPGIMNSSMKPEN.

2 disordered regions span residues M1 to I53 and D71 to R102. A compositionally biased stretch (polar residues) spans P22 to V31. Residues S32 to I53 are compositionally biased toward low complexity. The DNA-binding element occupies G101–P184. Residues D150–P184 carry the DEF box motif. Residues R185–S234 are a coiled coil. The disordered stretch occupies residues P296–N385. Residues P300 to T327 show a composition bias toward polar residues. A compositionally biased stretch (low complexity) spans H336 to Q349. A compositionally biased stretch (polar residues) spans E355–D364.

It belongs to the E2F/DP family. In terms of assembly, heterodimer with non-phosphorylated E2FC. No interaction with phosphorylated E2FC. Interacts preferentially with E2FC, but also with E2FA and E2FB. Interacts with SKP2A. Targeted for proteasomal degradation by the SCF(SKP2A) E3 ubiquitin ligase complex. Phosphorylated. As to expression, ubiquitous.

The protein resides in the nucleus. It is found in the cytoplasm. Its function is as follows. Involved in the regulation of the G1/S transition. Increases the DNA binding activity of E2F proteins after heterodimerization. The complex DPB/E2FC restricts cell division and lateral root initiation and may function as a negative regulator of E2F-regulated genes. The interaction with SKP2A is controlled by auxin. The chain is Transcription factor-like protein DPB (DPB) from Arabidopsis thaliana (Mouse-ear cress).